The chain runs to 287 residues: MKQKYFSGTSVIIGKPNVGKSTIINKLINSKISIVSKKKHTTQSNITGIMNIGLQHQLIYIDTPGISKKYVYKNQNKTFRNTMALMHSIQFIFLILEKTSWTNEDEYILNIVKKYLKPIFAIINKIDKIKSKEHLLPHILTLSKKHMFQEIIPISGKTGENIHILSKVIQNKLKIVPKPTFPFDLKTNLDIKSIVSEIIREKLILYLGDELPYSIQVSTKNIIDRNIKTSYIEAVISVNNTQHKKIIIGCKGKKIKLCGSLARKALEKFFNKSIYLSLKVIKKNKTL.

An Era-type G domain is found at 6–178 (FSGTSVIIGK…IQNKLKIVPK (173 aa)). Residues 14 to 21 (GKPNVGKS) form a G1 region. Residue 14-21 (GKPNVGKS) participates in GTP binding. Residues 40 to 44 (HTTQS) form a G2 region. The segment at 62 to 65 (DTPG) is G3. GTP-binding positions include 62 to 66 (DTPGI) and 124 to 127 (NKID). The interval 124–127 (NKID) is G4. Positions 154–156 (ISG) are G5. In terms of domain architecture, KH type-2 spans 207 to 282 (LGDELPYSIQ…SIYLSLKVIK (76 aa)).

This sequence belongs to the TRAFAC class TrmE-Era-EngA-EngB-Septin-like GTPase superfamily. Era GTPase family. In terms of assembly, monomer.

It localises to the cytoplasm. It is found in the cell membrane. In terms of biological role, an essential GTPase that binds both GDP and GTP, with rapid nucleotide exchange. Plays a role in 16S rRNA processing and 30S ribosomal subunit biogenesis and possibly also in cell cycle regulation and energy metabolism. The protein is GTPase Era of Buchnera aphidicola subsp. Baizongia pistaciae (strain Bp).